We begin with the raw amino-acid sequence, 367 residues long: MYPESTTDSPARLSLRQTGSPGMIYSARYGSPKRQLQFYRNLGKSGLRVSCLGLGTWVTFGGQITDEMAEQLMTLAYDNGINLFDTAEVYAAGKAEVVLGNIIKKKGWRRSSLVITTKIFWGGKAETERGLSRKHIIEGLKASLERLQLDYVDVVFANRPDPNTPMEETVRAMTHVINQGMAMYWGTSRWSSMEIMEAYSVARQFNLIPPICEQAEYHMFQREKVEVQLPELFHKIGVGAMTWSPLACGIVSGKYDGGIPPYSRASLKGYQWLKDKILSEEGRRQQAKLKEFQAIAERLGCTLPQLAIAWCLRNEGVSSVLLGASNADQLLENIGAIQVLPKLSSSIIHEIDGILGNKPYSKKDYRS.

The NADP(+) site is built by threonine 56, tryptophan 57, glutamine 63, and aspartate 85. Tyrosine 90 functions as the Proton donor/acceptor in the catalytic mechanism. NADP(+) contacts are provided by asparagine 158, serine 188, arginine 189, glutamine 214, tryptophan 243, serine 244, proline 245, leucine 246, alanine 247, cysteine 248, lysine 254, tyrosine 262, arginine 264, glycine 323, serine 325, glutamine 329, glutamate 332, and asparagine 333.

This sequence belongs to the shaker potassium channel beta subunit family. As to quaternary structure, forms heteromultimeric complex with alpha subunits.

The protein localises to the cytoplasm. It is found in the membrane. Its subcellular location is the cell membrane. The protein resides in the cell projection. It localises to the axon. The protein localises to the synapse. It is found in the synaptosome. Its subcellular location is the cytoskeleton. Functionally, regulatory subunit of the voltage-gated potassium (Kv) Shaker channels composed of pore-forming and potassium-conducting alpha subunits and of regulatory beta subunits. The beta-2/KCNAB2 cytoplasmic subunit may promote potassium channel closure via a mechanism that does not involve physical obstruction of the channel pore. Enhances current amplitude of Kv1.1/KCNA1 and Kv2.2/KCNA2 channels. May display nicotinamide adenine dinucleotide phosphate (NADPH)-dependent aldoketoreductase activity by catalyzing the NADPH-dependent reduction of a wide range of aldehyde and ketone substrates. The binding of oxidized and reduced nucleotide may alter Kv channel gating and contribute to dynamic fine tuning of cell excitability. This Xenopus laevis (African clawed frog) protein is Voltage-gated potassium channel subunit beta-2 (kcnab2).